A 394-amino-acid polypeptide reads, in one-letter code: Elongation factor Tu (394 aa).

Residues 10-204 form the tr-type G domain; sequence KPHVNVGTIG…ALDSYIPTPE (195 aa). Residues 19-26 form a G1 region; it reads GHVDHGKT. 19 to 26 is a GTP binding site; that stretch reads GHVDHGKT. Position 26 (T26) interacts with Mg(2+). Positions 60–64 are G2; the sequence is GITIN. A G3 region spans residues 81-84; sequence DCPG. GTP-binding positions include 81-85 and 136-139; these read DCPGH and NKCD. The tract at residues 136–139 is G4; the sequence is NKCD. The segment at 174–176 is G5; that stretch reads SAL.

The protein belongs to the TRAFAC class translation factor GTPase superfamily. Classic translation factor GTPase family. EF-Tu/EF-1A subfamily. Monomer.

The protein localises to the cytoplasm. It carries out the reaction GTP + H2O = GDP + phosphate + H(+). In terms of biological role, GTP hydrolase that promotes the GTP-dependent binding of aminoacyl-tRNA to the A-site of ribosomes during protein biosynthesis. The protein is Elongation factor Tu of Neisseria meningitidis serogroup A / serotype 4A (strain DSM 15465 / Z2491).